The primary structure comprises 109 residues: MSDVLERLAQVLEARKDADPDTSYVASLHAKGLNKILEKVGEECTETLLAAKDAEHSGETRDLVYETADLWFHSLVMLSRLGLGPKDVLDELASRFDLSGLEEKASRNP.

The protein belongs to the PRA-PH family.

The protein resides in the cytoplasm. It catalyses the reaction 1-(5-phospho-beta-D-ribosyl)-ATP + H2O = 1-(5-phospho-beta-D-ribosyl)-5'-AMP + diphosphate + H(+). The protein operates within amino-acid biosynthesis; L-histidine biosynthesis; L-histidine from 5-phospho-alpha-D-ribose 1-diphosphate: step 2/9. The polypeptide is Phosphoribosyl-ATP pyrophosphatase (Marinobacter nauticus (strain ATCC 700491 / DSM 11845 / VT8) (Marinobacter aquaeolei)).